Reading from the N-terminus, the 271-residue chain is uncharacterized protein (271 aa).

The next 3 helical transmembrane spans lie at 11–33 (GWLALALVVVAFTYLCFTVLAPW), 172–194 (SINTGQVAALTGVQLAGSYLQLI), and 214–236 (FLSYGIQWISFGILAPIGLGYFA). A disordered region spans residues 245–271 (REKAGSPPPDKPMTVEQKLADRYGRRR). Over residues 262-271 (KLADRYGRRR) the composition is skewed to basic and acidic residues.

This sequence belongs to the SURF1 family.

The protein localises to the cell membrane. This is an uncharacterized protein from Mycobacterium tuberculosis (strain CDC 1551 / Oshkosh).